Reading from the N-terminus, the 1819-residue chain is Protein REDUCED CHLOROPLAST COVERAGE 2 (1819 aa).

Residues Met1 to Lys17 are compositionally biased toward basic residues. Disordered regions lie at residues Met1–Lys23, Lys128–Glu180, Gln595–Lys619, and Lys634–Gln664. Composition is skewed to basic and acidic residues over residues Leu135 to Gly145 and Ser600 to Pro612. The 275-residue stretch at Glu329 to Lys603 folds into the Clu domain. A coiled-coil region spans residues Thr649–Ala680. TPR repeat units follow at residues Gly892 to Val925, Ala934 to Glu967, Met976 to Thr1009, Ala1018 to Leu1051, and Ala1060 to Lys1093. Disordered regions lie at residues Ser1152 to Ser1360, Lys1413 to Glu1456, Lys1468 to Val1513, Leu1527 to Pro1573, Ser1616 to Met1670, and Leu1731 to Asp1809. 2 stretches are compositionally biased toward basic and acidic residues: residues Ser1199–Lys1224 and Lys1230–His1239. Phosphoserine is present on Ser1244. The segment covering Lys1269 to Ala1313 has biased composition (polar residues). Position 1320 is a phosphoserine (Ser1320). Over residues Leu1343 to Lys1354 the composition is skewed to polar residues. 2 stretches are compositionally biased toward polar residues: residues Cys1496 to Glu1511 and Asn1536 to Ser1546. A compositionally biased stretch (basic and acidic residues) spans Asp1551–Lys1566. Positions Ser1650–Asn1665 are enriched in polar residues. Over residues Ser1742–Gly1759 the composition is skewed to basic and acidic residues. The span at Gln1767–Ser1778 shows a compositional bias: polar residues. The segment covering Thr1785–Gly1800 has biased composition (basic and acidic residues).

In terms of tissue distribution, expressed in the non-epidermal tissues of the true leaves. Not detected in the vegetative shoot meristem and leaf primordia.

Its subcellular location is the nucleus. It localises to the cytoplasm. It is found in the cytosol. Negatively regulates meristematic tissue proliferation by integrating developmental signals with carbon source availability. May act as the scaffold of a protein complex, which sequesters key factors that are required for the G2 to M transition in meristematic tissues. Together with REC2, REC3 and FMT/CLU, contributes to the establishment of the cellular volume devoted to the chloroplast compartment. This chain is Protein REDUCED CHLOROPLAST COVERAGE 2, found in Arabidopsis thaliana (Mouse-ear cress).